The primary structure comprises 504 residues: Glucose-6-phosphate isomerase (504 aa).

The active-site Proton donor is glutamate 333. Active-site residues include histidine 364 and lysine 473.

It belongs to the GPI family.

The protein resides in the cytoplasm. The enzyme catalyses alpha-D-glucose 6-phosphate = beta-D-fructose 6-phosphate. It participates in carbohydrate biosynthesis; gluconeogenesis. It functions in the pathway carbohydrate degradation; glycolysis; D-glyceraldehyde 3-phosphate and glycerone phosphate from D-glucose: step 2/4. In terms of biological role, catalyzes the reversible isomerization of glucose-6-phosphate to fructose-6-phosphate. This is Glucose-6-phosphate isomerase from Xanthomonas oryzae pv. oryzae (strain MAFF 311018).